The following is a 307-amino-acid chain: ATP-dependent (S)-NAD(P)H-hydrate dehydratase (307 aa).

The YjeF C-terminal domain occupies M1–V291. (6S)-NADPHX-binding positions include G96 and N150 to R156. ATP contacts are provided by residues K194–D198 and S214–G223. Residue D224 participates in (6S)-NADPHX binding.

The protein belongs to the NnrD/CARKD family. The cofactor is Mg(2+).

The catalysed reaction is (6S)-NADHX + ATP = ADP + phosphate + NADH + H(+). It carries out the reaction (6S)-NADPHX + ATP = ADP + phosphate + NADPH + H(+). Its function is as follows. Catalyzes the dehydration of the S-form of NAD(P)HX at the expense of ATP, which is converted to ADP. Together with NAD(P)HX epimerase, which catalyzes the epimerization of the S- and R-forms, the enzyme allows the repair of both epimers of NAD(P)HX, a damaged form of NAD(P)H that is a result of enzymatic or heat-dependent hydration. This is ATP-dependent (S)-NAD(P)H-hydrate dehydratase from Caenorhabditis briggsae.